The primary structure comprises 320 residues: Putative cyclin-D7-1 (320 aa).

Positions 1 to 46 are disordered; the sequence is MDDDDDTSFNNSLDLYCDEDPFDSTPPPPPPPPEQQQQAGTTTPDD. Residues 24-34 show a composition bias toward pro residues; that stretch reads STPPPPPPPPE. A compositionally biased stretch (low complexity) spans 35–44; that stretch reads QQQQAGTTTP.

Belongs to the cyclin family. Cyclin D subfamily.

This Oryza sativa subsp. japonica (Rice) protein is Putative cyclin-D7-1 (CYCD7-1).